The chain runs to 472 residues: MDITAILHMHAELSLTAVFILMFLLDLFLPATQRHWLRPMACILLTIQLLANLWPEEVTLFGGMYHSTPMASVLKSILTIGTILVFLQADTWLKREDTRHKQGEFYILTLSTLLGMYFMVSAGHFLLFFLGLELATVPMACLVAFDKYKGHSAEAGAKFILSALFSSGIFLYGISMIYGTAGTLYFEDIPAGLTGTPLQVLALVFFFSGLAFKLSLVPFHLWTADTYQGAPTTVSAYLSVISKGAAAFALMIILMKVFGPMTEQWSEILCIIIVATITIANLFAIRQNNLKRFMAFSSISQAGYIMLAVLAGTPQDMASLVYYIVVYIAANLAVFGVISTIEQHTHGKIEREDYNGLYKTNPKLTMVMTLALFSLAGIPPFAGFFSKFFVFMAAFHSGYYLIVFIALVNTIISLYYYLLIVKAMFITPNEDPIGNFRTATPMRISLLVCVAGIFVLGIISGVYQLLSDTAIL.

The next 14 helical transmembrane spans lie at 11-31 (AELS…FLPA), 43-63 (ILLT…LFGG), 67-87 (STPM…LVFL), 103-123 (GEFY…VSAG), 125-145 (FLLF…LVAF), 159-179 (FILS…MIYG), 200-220 (VLAL…VPFH), 234-254 (VSAY…MIIL), 265-285 (WSEI…LFAI), 293-313 (FMAF…LAGT), 318-338 (ASLV…FGVI), 362-384 (PKLT…FAGF), 401-421 (LIVF…LLIV), and 446-466 (LLVC…YQLL).

It belongs to the complex I subunit 2 family. As to quaternary structure, NDH-1 is composed of 14 different subunits. Subunits NuoA, H, J, K, L, M, N constitute the membrane sector of the complex.

It localises to the cell inner membrane. It carries out the reaction a quinone + NADH + 5 H(+)(in) = a quinol + NAD(+) + 4 H(+)(out). Functionally, NDH-1 shuttles electrons from NADH, via FMN and iron-sulfur (Fe-S) centers, to quinones in the respiratory chain. The immediate electron acceptor for the enzyme in this species is believed to be a menaquinone. Couples the redox reaction to proton translocation (for every two electrons transferred, four hydrogen ions are translocated across the cytoplasmic membrane), and thus conserves the redox energy in a proton gradient. This chain is NADH-quinone oxidoreductase subunit N, found in Phocaeicola vulgatus (strain ATCC 8482 / DSM 1447 / JCM 5826 / CCUG 4940 / NBRC 14291 / NCTC 11154) (Bacteroides vulgatus).